The sequence spans 623 residues: EIN3-binding F-box protein 2 (623 aa).

An F-box domain is found at 52–106 (QTSIDVLPEECLFEILRRLPSGQERSACACVSKHWLNLLSSISRSEVNESSVQDV). LRR repeat units follow at residues 119 to 147 (GKKATDLRLAAIAVGTSSRGGLGKLQIRG), 151 to 176 (ESKVTDVGLGAVAHGCPSLRIVSLWN), 177 to 202 (LPAVSDLGLSEIARSCPMIEKLDLSR), 203 to 228 (CPGITDSGLVAIAENCVNLSDLTIDS), 229 to 254 (CSGVGNEGLRAIARRCVNLRSISIRS), 255 to 281 (CPRIGDQGVAFLLAQAGSYLTKVKLQM), 307 to 334 (LQGVNEKGFWVMGNAKGLKKLKSLSVMS), 335 to 360 (CRGMTDVGLEAVGNGCPDLKHVSLNK), 361 to 386 (CLLVSGKGLVALAKSALSLESLKLEE), 387 to 413 (CHRINQFGLMGFLMNCGSKLKAFSLAN), 414 to 441 (CLGISDFNSESSLPSPSCSSLRSLSIRC), 442 to 467 (CPGFGDASLAFLGKFCHQLQDVELCG), 468 to 494 (LNGVTDAGVRELLQSNNVGLVKVNLSE), 495 to 521 (CINVSDNTVSAISVCHGRTLESLNLDG), 522 to 547 (CKNITNASLVAVAKNCYSVNDLDISN), 548 to 574 (TLVSDHGIKALASSPNHLNLQVLSIGG), 575 to 600 (CSSITDKSKACIQKLGRTLLGLNIQR), and 601 to 623 (CGRISSSTVDTLLENLWRCDILY).

In terms of assembly, part of a SCF (SKP1-cullin-F-box) protein ligase complex. Interacts with CUL1, SKP1A/ASK1, SKP1B/ASK2, EIN3, and EIL1. As to expression, ubiquitous.

Its subcellular location is the nucleus. The protein operates within protein modification; protein ubiquitination. Its function is as follows. Component of SCF(EBF1) E3 ubiquitin ligase complexes, which may mediate the ubiquitination and subsequent proteasomal degradation of target proteins (probably including EIN3 and EIL1). Regulator of the ethylene signaling cascade by modulating the stability of EIN3 and EIL1 proteins. The polypeptide is EIN3-binding F-box protein 2 (EBF2) (Arabidopsis thaliana (Mouse-ear cress)).